The sequence spans 261 residues: Imidazole glycerol phosphate synthase subunit HisF (261 aa).

Catalysis depends on residues D11 and D130.

This sequence belongs to the HisA/HisF family. As to quaternary structure, heterodimer of HisH and HisF.

The protein localises to the cytoplasm. The catalysed reaction is 5-[(5-phospho-1-deoxy-D-ribulos-1-ylimino)methylamino]-1-(5-phospho-beta-D-ribosyl)imidazole-4-carboxamide + L-glutamine = D-erythro-1-(imidazol-4-yl)glycerol 3-phosphate + 5-amino-1-(5-phospho-beta-D-ribosyl)imidazole-4-carboxamide + L-glutamate + H(+). It functions in the pathway amino-acid biosynthesis; L-histidine biosynthesis; L-histidine from 5-phospho-alpha-D-ribose 1-diphosphate: step 5/9. Its function is as follows. IGPS catalyzes the conversion of PRFAR and glutamine to IGP, AICAR and glutamate. The HisF subunit catalyzes the cyclization activity that produces IGP and AICAR from PRFAR using the ammonia provided by the HisH subunit. This chain is Imidazole glycerol phosphate synthase subunit HisF, found in Heliobacterium modesticaldum (strain ATCC 51547 / Ice1).